We begin with the raw amino-acid sequence, 171 residues long: Peptide deformylase (171 aa).

Residues Cys-91 and His-133 each contribute to the Fe cation site. The active site involves Glu-134. His-137 provides a ligand contact to Fe cation.

This sequence belongs to the polypeptide deformylase family. Requires Fe(2+) as cofactor.

The enzyme catalyses N-terminal N-formyl-L-methionyl-[peptide] + H2O = N-terminal L-methionyl-[peptide] + formate. Functionally, removes the formyl group from the N-terminal Met of newly synthesized proteins. Requires at least a dipeptide for an efficient rate of reaction. N-terminal L-methionine is a prerequisite for activity but the enzyme has broad specificity at other positions. The sequence is that of Peptide deformylase from Mannheimia succiniciproducens (strain KCTC 0769BP / MBEL55E).